A 338-amino-acid polypeptide reads, in one-letter code: Lipoate-protein ligase A (338 aa).

A BPL/LPL catalytic domain is found at 29 to 216 (SPDQRVLFLW…AFFNYYDEKV (188 aa)). Residues arginine 71, 76-79 (GAVF), and lysine 134 each bind ATP. Position 134 (lysine 134) interacts with (R)-lipoate.

This sequence belongs to the LplA family. As to quaternary structure, monomer.

The protein localises to the cytoplasm. The catalysed reaction is L-lysyl-[lipoyl-carrier protein] + (R)-lipoate + ATP = N(6)-[(R)-lipoyl]-L-lysyl-[lipoyl-carrier protein] + AMP + diphosphate + H(+). Its pathway is protein modification; protein lipoylation via exogenous pathway; protein N(6)-(lipoyl)lysine from lipoate: step 1/2. The protein operates within protein modification; protein lipoylation via exogenous pathway; protein N(6)-(lipoyl)lysine from lipoate: step 2/2. Its function is as follows. Catalyzes both the ATP-dependent activation of exogenously supplied lipoate to lipoyl-AMP and the transfer of the activated lipoyl onto the lipoyl domains of lipoate-dependent enzymes. This Yersinia enterocolitica serotype O:8 / biotype 1B (strain NCTC 13174 / 8081) protein is Lipoate-protein ligase A.